The following is a 67-amino-acid chain: Conotoxin ArMLKM-01 (67 aa).

The signal sequence occupies residues 1–24 (MLKMEVVLFTFLVLFPLSTLQLET). A propeptide spanning residues 25 to 51 (DQPVERYVENKQDLNPDESRNFMLPIV) is cleaved from the precursor. 3 cysteine pairs are disulfide-bonded: Cys-54-Cys-65, Cys-55-Cys-63, and Cys-58-Cys-66.

This sequence belongs to the conotoxin M superfamily. As to expression, expressed by the venom duct.

It is found in the secreted. The sequence is that of Conotoxin ArMLKM-01 from Conus arenatus (Sand-dusted cone).